A 306-amino-acid polypeptide reads, in one-letter code: Homoserine kinase (306 aa).

ATP is bound at residue 84 to 94; it reads PAGLGLGSSGA.

It belongs to the GHMP kinase family. Homoserine kinase subfamily.

Its subcellular location is the cytoplasm. The enzyme catalyses L-homoserine + ATP = O-phospho-L-homoserine + ADP + H(+). Its pathway is amino-acid biosynthesis; L-threonine biosynthesis; L-threonine from L-aspartate: step 4/5. Catalyzes the ATP-dependent phosphorylation of L-homoserine to L-homoserine phosphate. In Sulfolobus acidocaldarius (strain ATCC 33909 / DSM 639 / JCM 8929 / NBRC 15157 / NCIMB 11770), this protein is Homoserine kinase.